The sequence spans 1399 residues: DNA-directed RNA polymerase subunit beta' (1399 aa).

Residues C70, C72, C85, and C88 each coordinate Zn(2+). Mg(2+)-binding residues include D460, D462, and D464. Zn(2+) is bound by residues C814, C888, C895, and C898. The interval 1367–1399 is disordered; it reads SERKRQRDLGKPQRVSASEAEAALTEALNSSGN. Residues 1382-1399 show a composition bias toward low complexity; the sequence is SASEAEAALTEALNSSGN.

The protein belongs to the RNA polymerase beta' chain family. In terms of assembly, the RNAP catalytic core consists of 2 alpha, 1 beta, 1 beta' and 1 omega subunit. When a sigma factor is associated with the core the holoenzyme is formed, which can initiate transcription. It depends on Mg(2+) as a cofactor. The cofactor is Zn(2+).

It carries out the reaction RNA(n) + a ribonucleoside 5'-triphosphate = RNA(n+1) + diphosphate. Functionally, DNA-dependent RNA polymerase catalyzes the transcription of DNA into RNA using the four ribonucleoside triphosphates as substrates. The polypeptide is DNA-directed RNA polymerase subunit beta' (Pseudomonas paraeruginosa (strain DSM 24068 / PA7) (Pseudomonas aeruginosa (strain PA7))).